The sequence spans 159 residues: Small ribosomal subunit protein uS9 (159 aa).

Belongs to the universal ribosomal protein uS9 family.

The sequence is that of Small ribosomal subunit protein uS9 from Rickettsia massiliae (strain Mtu5).